The primary structure comprises 200 residues: Transcription elongation factor A protein-like 3 (200 aa).

The disordered stretch occupies residues 1-200 (MEKPYNKNEG…QRGLHDIPYL (200 aa)). A compositionally biased stretch (acidic residues) spans 20 to 36 (DEVEPDDEGKSDEEEKP). S30 carries the post-translational modification Phosphoserine. Residues 37 to 50 (DVEGKTECEGKRED) show a composition bias toward basic and acidic residues. Over residues 51-64 (EGEPGDEGQLEDEG) the composition is skewed to acidic residues. Residue S65 is modified to Phosphoserine. 3 stretches are compositionally biased toward basic and acidic residues: residues 65-80 (SQEKQGRSEGEGKPQG), 96-107 (AAEKRPAEDYVP), and 115-154 (DRGTDDSPKDSQEDLQERHLSSEEMMRECGDVSRAQEELR).

This sequence belongs to the TFS-II family. TFA subfamily.

The protein resides in the nucleus. Functionally, may be involved in transcriptional regulation. This chain is Transcription elongation factor A protein-like 3 (TCEAL3), found in Homo sapiens (Human).